Consider the following 158-residue polypeptide: F(420)H(2) dehydrogenase subunit C (158 aa).

Belongs to the complex I 30 kDa subunit family. In terms of assembly, the FPO complex is composed of at least 13 different subunits.

The protein resides in the cell membrane. It catalyses the reaction methanophenazine + reduced coenzyme F420-(gamma-L-Glu)(n) = dihydromethanophenazine + oxidized coenzyme F420-(gamma-L-Glu)(n) + H(+). Its function is as follows. Component of the F(420)H(2) dehydrogenase (FPO complex) which is part of the energy-conserving F(420)H(2):heterodisulfide oxidoreductase system. The membrane-bound electron transfer system of the complex plays an important role in the metabolism of methylotrophic methanogens when the organisms grow on methanol or methylamines. Catalyzes the oxidation of methanophenazine to dihydromethanophenazine. It shuttles electrons from F(420)H(2), via FAD and iron-sulfur (Fe-S) centers, to methanophenazine (an electron carrier in the membrane). It couples the redox reaction to proton translocation (for every two electrons transferred, two hydrogen ions are translocated across the cytoplasmic membrane), and thus conserves the redox energy in a proton gradient. It also catalyzes the oxidation of F(420)H(2) with quinones such as 2,3-dimethyl-1,4-naphthoquinone, 2-methyl-1,4-naphthoquinone and tetramethyl-p-benzoquinone. This is F(420)H(2) dehydrogenase subunit C (fpoC) from Methanosarcina mazei (strain ATCC BAA-159 / DSM 3647 / Goe1 / Go1 / JCM 11833 / OCM 88) (Methanosarcina frisia).